A 107-amino-acid chain; its full sequence is Iron-sulfur cluster assembly protein CyaY (107 aa).

It belongs to the frataxin family.

Involved in iron-sulfur (Fe-S) cluster assembly. May act as a regulator of Fe-S biogenesis. This Neisseria meningitidis serogroup A / serotype 4A (strain DSM 15465 / Z2491) protein is Iron-sulfur cluster assembly protein CyaY.